The following is a 415-amino-acid chain: Probable glucuronosyltransferase Os01g0926600 (415 aa).

Topologically, residues 1–4 (MAMR) are cytoplasmic. A helical; Signal-anchor for type II membrane protein membrane pass occupies residues 5–25 (LSSAAVALALLLAATALEDVA). At 26–415 (RGQDTERIEG…QGPVGDLKPW (390 aa)) the chain is on the lumenal side. 2 N-linked (GlcNAc...) asparagine glycosylation sites follow: N142 and N403.

This sequence belongs to the glycosyltransferase 47 family.

The protein localises to the golgi apparatus membrane. Its function is as follows. Involved in the synthesis of glucuronoxylan hemicellulose in secondary cell walls. In Oryza sativa subsp. japonica (Rice), this protein is Probable glucuronosyltransferase Os01g0926600.